Reading from the N-terminus, the 647-residue chain is LIM domain kinase 1 (647 aa).

2 LIM zinc-binding domains span residues 25–75 (CASC…CKKD) and 84–137 (CHGC…CGQC). The PDZ domain maps to 165 to 258 (LVSIPASAHG…LLQLTLEHDP (94 aa)). At Ser210 the chain carries Phosphoserine. Thr229 is subject to Phosphothreonine. The segment at 256 to 319 (HDPHDSLGHG…SPASQRKDLG (64 aa)) is disordered. The span at 266-277 (PVSDPSPLSSPV) shows a compositional bias: low complexity. Polar residues-rich tracts occupy residues 278–289 (HTPSGQAASSAR) and 298–313 (SIDTSPGTSSLASPAS). Phosphoserine is present on residues Ser298, Ser302, Ser307, and Ser310. Position 323 is a phosphoserine; by MAPKAPK2 (Ser323). The residue at position 337 (Ser337) is a Phosphoserine. The Protein kinase domain maps to 339 to 604 (LIHGEVLGKG…PSFVKLEQWL (266 aa)). ATP-binding positions include 345 to 353 (LGKGCFGQA) and Lys368. Asp460 is an active-site residue. Thr508 bears the Phosphothreonine; by ROCK1 mark.

This sequence belongs to the protein kinase superfamily. TKL Ser/Thr protein kinase family. As to quaternary structure, self-associates to form homodimers. Interacts with HSP90AA1; this interaction promotes LIMK1 dimerization and subsequent transphosphorylation. Interacts with CDKN1C. Interacts (via LIM domain) with the cytoplasmic domain of NRG1. Interacts with NISCH. Interacts with SSH1. Interacts with RLIM and RNF6. Interacts (via LIM zinc-binding domains) with FAM89B/LRAP25 (via LRR repeat). Forms a tripartite complex with CDC42BPA, CDC42BPB and FAM89B/LRAP25. In terms of processing, autophosphorylated. Phosphorylated on Thr-508 by ROCK1 and PAK1, resulting in activation. Phosphorylated by PAK4 which increases the ability of LIMK1 to phosphorylate cofilin. Phosphorylated at Ser-323 by MAPKAPK2 during activation of VEGFA-induced signaling, which results in activation of LIMK1 and promotion of actin reorganization, cell migration, and tubule formation of endothelial cells. Dephosphorylated and inactivated by SSH1. Phosphorylated by CDC42BP. Ubiquitinated. 'Lys-48'-linked polyubiquitination by RNF6 leads to proteasomal degradation through the 26S proteasome, modulating LIMK1 levels in the growth cone and its effect on axonal outgrowth. Also polyubiquitinated by RLIM. In terms of tissue distribution, highest expression in the nervous system, particularly in the spinal cord and the cranial nerve and dorsal root ganglia.

It is found in the cytoplasm. Its subcellular location is the nucleus. It localises to the cytoskeleton. The protein localises to the cell projection. The protein resides in the lamellipodium. The catalysed reaction is L-seryl-[protein] + ATP = O-phospho-L-seryl-[protein] + ADP + H(+). It carries out the reaction L-threonyl-[protein] + ATP = O-phospho-L-threonyl-[protein] + ADP + H(+). In terms of biological role, serine/threonine-protein kinase that plays an essential role in the regulation of actin filament dynamics. Acts downstream of several Rho family GTPase signal transduction pathways. Activated by upstream kinases including ROCK1, PAK1 and PAK4, which phosphorylate LIMK1 on a threonine residue located in its activation loop. LIMK1 subsequently phosphorylates and inactivates the actin binding/depolymerizing factors cofilin-1/CFL1, cofilin-2/CFL2 and destrin/DSTN, thereby preventing the cleavage of filamentous actin (F-actin), and stabilizing the actin cytoskeleton. In this way LIMK1 regulates several actin-dependent biological processes including cell motility, cell cycle progression, and differentiation. Phosphorylates TPPP on serine residues, thereby promoting microtubule disassembly. Stimulates axonal outgrowth and may be involved in brain development. The polypeptide is LIM domain kinase 1 (Limk1) (Mus musculus (Mouse)).